A 455-amino-acid chain; its full sequence is Phosphoglucosamine mutase (455 aa).

Catalysis depends on serine 106, which acts as the Phosphoserine intermediate. Positions 106, 245, 247, and 249 each coordinate Mg(2+). A Phosphoserine modification is found at serine 106.

The protein belongs to the phosphohexose mutase family. It depends on Mg(2+) as a cofactor. Post-translationally, activated by phosphorylation.

It carries out the reaction alpha-D-glucosamine 1-phosphate = D-glucosamine 6-phosphate. Its function is as follows. Catalyzes the conversion of glucosamine-6-phosphate to glucosamine-1-phosphate. This chain is Phosphoglucosamine mutase, found in Acaryochloris marina (strain MBIC 11017).